Consider the following 38-residue polypeptide: Photosystem II reaction center protein X (38 aa).

A helical transmembrane segment spans residues 8 to 28; sequence FLWSLVAGAVVLGALFGAIIF.

This sequence belongs to the PsbX family. Type 1 subfamily. As to quaternary structure, PSII is composed of 1 copy each of membrane proteins PsbA, PsbB, PsbC, PsbD, PsbE, PsbF, PsbH, PsbI, PsbJ, PsbK, PsbL, PsbM, PsbT, PsbX, PsbY, PsbZ, Psb30/Ycf12, peripheral proteins PsbO, CyanoQ (PsbQ), PsbU, PsbV and a large number of cofactors. It forms dimeric complexes.

It is found in the cellular thylakoid membrane. Involved in the binding and/or turnover of quinones at the Q(B) site of photosystem II (PSII). PSII is a light-driven water plastoquinone oxidoreductase, using light energy to abstract electrons from H(2)O, generating a proton gradient subsequently used for ATP formation. This is Photosystem II reaction center protein X from Synechococcus sp. (strain JA-2-3B'a(2-13)) (Cyanobacteria bacterium Yellowstone B-Prime).